The chain runs to 263 residues: Uroplakin-3b-like protein 1 (263 aa).

A signal peptide spans 1 to 33; that stretch reads MDNSWRLGPAIGLSAGQSQLLVSLLLLLTRVQP. Topologically, residues 34-204 are extracellular; sequence GTDVAAPEHI…PGPQSPGTVV (171 aa). N-linked (GlcNAc...) asparagine glycosylation is found at Asn-51, Asn-76, and Asn-91. A helical membrane pass occupies residues 205 to 225; that stretch reads IIAILSILLAVLLTVLLAVLI. Residues 226-263 are Cytoplasmic-facing; that stretch reads YTCFNSCRSTSLSGPEEAGSVRRYTTHLAFSTPAEGAS.

This sequence belongs to the uroplakin-3 family.

Its subcellular location is the membrane. The chain is Uroplakin-3b-like protein 1 from Homo sapiens (Human).